The following is a 192-amino-acid chain: MNFILASSSERRKELLKRIVENFEVIPSDYDEKEVAFNGNCSEYVMELSKGKALNVASKLKRDSGIIIASDTIVYFNGEVLGKPSSKEHAYEMLKSLSGEVHEVYSGIVIYDLSSKKIKADYSCSKVKFSNLDDKMIREYIKTGEPMDKAGSYGIQGYGGIFVEKIHGCYYNIVGLPINKLYFLLKEMGVNL.

Asp-71 (proton acceptor) is an active-site residue.

Belongs to the Maf family. YhdE subfamily. The cofactor is a divalent metal cation.

The protein resides in the cytoplasm. It catalyses the reaction dTTP + H2O = dTMP + diphosphate + H(+). The catalysed reaction is UTP + H2O = UMP + diphosphate + H(+). Nucleoside triphosphate pyrophosphatase that hydrolyzes dTTP and UTP. May have a dual role in cell division arrest and in preventing the incorporation of modified nucleotides into cellular nucleic acids. In Clostridium tetani (strain Massachusetts / E88), this protein is dTTP/UTP pyrophosphatase.